We begin with the raw amino-acid sequence, 162 residues long: Interleukin-15 (162 aa).

An N-terminal signal peptide occupies residues 1–29 (MRISKPHLRSVSIQCYLCLLLNSHFLTEA). A propeptide spanning residues 30–48 (GIHVFILGCFSAGLPKTEA) is cleaved from the precursor. Cystine bridges form between cysteine 83–cysteine 133 and cysteine 90–cysteine 136. N-linked (GlcNAc...) asparagine glycosylation is present at asparagine 127.

The protein belongs to the IL-15/IL-21 family.

It is found in the secreted. Its function is as follows. Cytokine that plays a major role in the development of inflammatory and protective immune responses to microbial invaders and parasites by modulating immune cells of both the innate and adaptive immune systems. Stimulates the proliferation of natural killer cells, T-cells and B-cells and promotes the secretion of several cytokines. In monocytes, induces the production of IL8 and monocyte chemotactic protein 1/CCL2, two chemokines that attract neutrophils and monocytes respectively to sites of infection. Unlike most cytokines, which are secreted in soluble form, IL15 is expressed in association with its high affinity IL15RA on the surface of IL15-producing cells and delivers signals to target cells that express IL2RB and IL2RG receptor subunits. Binding to its receptor triggers the phosphorylation of JAK1 and JAK3 and the recruitment and subsequent phosphorylation of signal transducer and activator of transcription-3/STAT3 and STAT5. In mast cells, induces the rapid tyrosine phosphorylation of STAT6 and thereby controls mast cell survival and release of cytokines such as IL4. This Macaca thibetana (Pere David's macaque) protein is Interleukin-15 (IL15).